Consider the following 476-residue polypeptide: Probable protein S-acyltransferase 5 (476 aa).

Positions 1 to 11 are enriched in basic and acidic residues; sequence MLDLQPSDRRH. Residues 1 to 21 are disordered; the sequence is MLDLQPSDRRHGAPSSSGGVS. 2 consecutive transmembrane segments (helical) span residues 53 to 73 and 85 to 105; these read SILI…IFVG and GVSV…FLLL. The disordered stretch occupies residues 119–138; that stretch reads YPPEPESNEGNGEPRLAHTP. The 51-residue stretch at 158 to 208 folds into the DHHC domain; it reads KYCDTCMLYRPPRASHCSICNNCVEKFDHHCPWLGQCIGLRNYRFYFMFVL. C188 functions as the S-palmitoyl cysteine intermediate in the catalytic mechanism. Transmembrane regions (helical) follow at residues 209–223 and 246–266; these read CSTL…FCWI and SIAL…LTCF. Disordered stretches follow at residues 320–340 and 373–454; these read SKEP…PSLQ and VASR…ASRD. Residue S336 is modified to Phosphoserine. The segment covering 387–412 has biased composition (basic and acidic residues); the sequence is SEGRGIMHSRESSRGRGIMHSRESSR. A Phosphoserine modification is found at S418. Residues 425–441 are compositionally biased toward basic and acidic residues; that stretch reads VNEDLRTRDESVSRVGE.

This sequence belongs to the DHHC palmitoyltransferase family.

The protein resides in the cell membrane. It carries out the reaction L-cysteinyl-[protein] + hexadecanoyl-CoA = S-hexadecanoyl-L-cysteinyl-[protein] + CoA. Palmitoyl acyltransferase. The sequence is that of Probable protein S-acyltransferase 5 (PAT05) from Arabidopsis thaliana (Mouse-ear cress).